Reading from the N-terminus, the 483-residue chain is Isocitrate dehydrogenase [NADP] (483 aa).

Thr-74 provides a ligand contact to NADP(+). D-threo-isocitrate-binding residues include Ser-83, Asn-85, Arg-89, Arg-99, and Arg-121. Asp-232 is a Mg(2+) binding site. Residues 264–270 (HGSAPDI) and Asn-277 each bind NADP(+).

Belongs to the isocitrate and isopropylmalate dehydrogenases family. Homodimer. The cofactor is Mg(2+). Requires Mn(2+) as cofactor.

It carries out the reaction D-threo-isocitrate + NADP(+) = 2-oxoglutarate + CO2 + NADPH. Its function is as follows. Catalyzes the oxidative decarboxylation of isocitrate to 2-oxoglutarate and carbon dioxide with the concomitant reduction of NADP(+). This is Isocitrate dehydrogenase [NADP] (icd) from Rickettsia prowazekii (strain Madrid E).